The chain runs to 187 residues: Protein GrpE (187 aa).

Positions 1–23 (MADEQNLDAQAQDQAAEAGAGEE) are disordered. Residues 7-23 (LDAQAQDQAAEAGAGEE) show a composition bias toward low complexity.

This sequence belongs to the GrpE family. In terms of assembly, homodimer.

The protein resides in the cytoplasm. Functionally, participates actively in the response to hyperosmotic and heat shock by preventing the aggregation of stress-denatured proteins, in association with DnaK and GrpE. It is the nucleotide exchange factor for DnaK and may function as a thermosensor. Unfolded proteins bind initially to DnaJ; upon interaction with the DnaJ-bound protein, DnaK hydrolyzes its bound ATP, resulting in the formation of a stable complex. GrpE releases ADP from DnaK; ATP binding to DnaK triggers the release of the substrate protein, thus completing the reaction cycle. Several rounds of ATP-dependent interactions between DnaJ, DnaK and GrpE are required for fully efficient folding. The sequence is that of Protein GrpE from Pseudomonas savastanoi pv. phaseolicola (strain 1448A / Race 6) (Pseudomonas syringae pv. phaseolicola (strain 1448A / Race 6)).